The following is a 206-amino-acid chain: Ribosomal RNA small subunit methyltransferase G (206 aa).

Residues G73, L78, 124–125 (VE), and R139 contribute to the S-adenosyl-L-methionine site.

Belongs to the methyltransferase superfamily. RNA methyltransferase RsmG family.

The protein localises to the cytoplasm. The enzyme catalyses guanosine(527) in 16S rRNA + S-adenosyl-L-methionine = N(7)-methylguanosine(527) in 16S rRNA + S-adenosyl-L-homocysteine. Functionally, specifically methylates the N7 position of guanine in position 527 of 16S rRNA. The sequence is that of Ribosomal RNA small subunit methyltransferase G from Yersinia pseudotuberculosis serotype O:3 (strain YPIII).